The following is a 2798-amino-acid chain: Kinesin-like protein KIN-12F (2798 aa).

The interval 1-165 (MVRDLAAVRR…RPPMSSGQRG (165 aa)) is disordered. Low complexity-rich tracts occupy residues 8-22 (VRRTPARASTSSSAS) and 31-58 (PVDASDAAVVEPEAAAARPPLLAIQPPQ). Residues 210–547 (NVQVVIRVRP…LKFAQRARLI (338 aa)) form the Kinesin motor domain. 291 to 298 (GQTGSGKT) provides a ligand contact to ATP. Residues 600–615 (DVDDGTESMNMDEEND) are compositionally biased toward acidic residues. The disordered stretch occupies residues 600–621 (DVDDGTESMNMDEENDNDAHDR). Coiled coils occupy residues 792 to 835 (ELKR…HSSN), 890 to 987 (LAEE…HRRQ), 1014 to 1108 (LKRM…VMKE), 1281 to 1322 (QRAM…LKNE), and 2130 to 2333 (ELVD…VRQQ). Residues 2338-2359 (PSSGQATSSLEGGMGDFTDSSR) form a disordered region. 2 coiled-coil regions span residues 2361–2427 (SREI…VKSD) and 2545–2758 (ESKE…LKLK). Residues 2772–2798 (RSESSSLSSGRSRSPSVCRSPSISSFR) form a disordered region. Over residues 2774–2798 (ESSSLSSGRSRSPSVCRSPSISSFR) the composition is skewed to low complexity.

This sequence belongs to the TRAFAC class myosin-kinesin ATPase superfamily. Kinesin family. KIN-12 subfamily.

In Oryza sativa subsp. japonica (Rice), this protein is Kinesin-like protein KIN-12F.